Reading from the N-terminus, the 971-residue chain is uncharacterized protein (971 aa).

Residues 1 to 24 form the signal peptide; it reads MQSNLLKVLGVLAIVATLVCFIFA. The disordered stretch occupies residues 127-146; it reads RTRPGKSNLDDSGQMIPIPR. 6 consecutive transmembrane segments (helical) span residues 611 to 631, 721 to 741, 753 to 773, 795 to 815, 832 to 852, and 865 to 885; these read IKAI…LGFA, LGLS…IVII, AFMA…FLLF, VVMM…LDFV, FIGT…INWF, and GVNM…YGYV. Residues 933 to 971 form a disordered region; it reads TGRAKSRLEQRNRTLEHAEQNSKKYKKRIGENTNEETLK. The span at 938-954 shows a compositional bias: basic and acidic residues; the sequence is SRLEQRNRTLEHAEQNS.

Belongs to the TrbL/VirB6 family.

The protein resides in the cell membrane. This is an uncharacterized protein from Rickettsia prowazekii (strain Madrid E).